The following is a 1073-amino-acid chain: Carbamoyl phosphate synthase large chain (1073 aa).

The segment at 1–403 is carboxyphosphate synthetic domain; the sequence is MPKRTDIKSI…SLQKALRGLE (403 aa). Residues Arg-129, Arg-169, Gly-175, Gly-176, Glu-208, Leu-210, Glu-215, Gly-241, Val-242, His-243, Gln-285, and Glu-299 each contribute to the ATP site. Residues 133 to 328 form the ATP-grasp 1 domain; sequence DKAMKSIGLA…IARVAAKLAV (196 aa). Mg(2+)-binding residues include Gln-285, Glu-299, and Asn-301. 3 residues coordinate Mn(2+): Gln-285, Glu-299, and Asn-301. The tract at residues 404–553 is oligomerization domain; the sequence is VGVCGLDPKL…YSTYEEECEA (150 aa). The carbamoyl phosphate synthetic domain stretch occupies residues 554–935; the sequence is NPSTRDKIMI…AFAKAQMGAS (382 aa). One can recognise an ATP-grasp 2 domain in the interval 678-869; the sequence is QQMVERLNLR…LAMIAARVMA (192 aa). The ATP site is built by Arg-714, His-753, Leu-755, Glu-760, Gly-785, Val-786, His-787, Ser-788, Gln-828, and Glu-840. Mg(2+) is bound by residues Gln-828, Glu-840, and Asn-842. Positions 828, 840, and 842 each coordinate Mn(2+). In terms of domain architecture, MGS-like spans 936-1073; sequence EVLPTGGTAF…LQDLHAGLKA (138 aa). An allosteric domain region spans residues 936–1073; sequence EVLPTGGTAF…LQDLHAGLKA (138 aa).

The protein belongs to the CarB family. As to quaternary structure, composed of two chains; the small (or glutamine) chain promotes the hydrolysis of glutamine to ammonia, which is used by the large (or ammonia) chain to synthesize carbamoyl phosphate. Tetramer of heterodimers (alpha,beta)4. The cofactor is Mg(2+). Requires Mn(2+) as cofactor.

The catalysed reaction is hydrogencarbonate + L-glutamine + 2 ATP + H2O = carbamoyl phosphate + L-glutamate + 2 ADP + phosphate + 2 H(+). The enzyme catalyses hydrogencarbonate + NH4(+) + 2 ATP = carbamoyl phosphate + 2 ADP + phosphate + 2 H(+). The protein operates within amino-acid biosynthesis; L-arginine biosynthesis; carbamoyl phosphate from bicarbonate: step 1/1. Its pathway is pyrimidine metabolism; UMP biosynthesis via de novo pathway; (S)-dihydroorotate from bicarbonate: step 1/3. Its function is as follows. Large subunit of the glutamine-dependent carbamoyl phosphate synthetase (CPSase). CPSase catalyzes the formation of carbamoyl phosphate from the ammonia moiety of glutamine, carbonate, and phosphate donated by ATP, constituting the first step of 2 biosynthetic pathways, one leading to arginine and/or urea and the other to pyrimidine nucleotides. The large subunit (synthetase) binds the substrates ammonia (free or transferred from glutamine from the small subunit), hydrogencarbonate and ATP and carries out an ATP-coupled ligase reaction, activating hydrogencarbonate by forming carboxy phosphate which reacts with ammonia to form carbamoyl phosphate. This Pseudomonas syringae pv. tomato (strain ATCC BAA-871 / DC3000) protein is Carbamoyl phosphate synthase large chain.